The primary structure comprises 120 residues: MGAQEIIRSIEAEYTKSDLPTIYVGDTVKVGVRIQEGGKERVQPYEGVVIANSGGGINESITVRRIFQGVGVERVFLLHSPAVASVQVLRRGRVRRAKLYYLRDRVGKATRVKQRFDRSI.

This sequence belongs to the bacterial ribosomal protein bL19 family.

This protein is located at the 30S-50S ribosomal subunit interface and may play a role in the structure and function of the aminoacyl-tRNA binding site. This Synechococcus sp. (strain ATCC 27144 / PCC 6301 / SAUG 1402/1) (Anacystis nidulans) protein is Large ribosomal subunit protein bL19.